A 354-amino-acid chain; its full sequence is Nicotinate-nucleotide--dimethylbenzimidazole phosphoribosyltransferase (354 aa).

Glutamate 313 (proton acceptor) is an active-site residue.

Belongs to the CobT family.

It catalyses the reaction 5,6-dimethylbenzimidazole + nicotinate beta-D-ribonucleotide = alpha-ribazole 5'-phosphate + nicotinate + H(+). The protein operates within nucleoside biosynthesis; alpha-ribazole biosynthesis; alpha-ribazole from 5,6-dimethylbenzimidazole: step 1/2. Functionally, catalyzes the synthesis of alpha-ribazole-5'-phosphate from nicotinate mononucleotide (NAMN) and 5,6-dimethylbenzimidazole (DMB). The sequence is that of Nicotinate-nucleotide--dimethylbenzimidazole phosphoribosyltransferase from Ralstonia nicotianae (strain ATCC BAA-1114 / GMI1000) (Ralstonia solanacearum).